Here is a 443-residue protein sequence, read N- to C-terminus: Cysteine proteinase B (443 aa).

The signal sequence occupies residues 1-27 (MATSRAALCAVAVVCVVLAAACAPARA). Residues 28-125 (IHVGTPAAAL…YRKARADLSA (98 aa)) constitute a propeptide, activation peptide. Cystine bridges form between Cys147–Cys188 and Cys181–Cys226. Cys150 is a catalytic residue. N-linked (GlcNAc...) asparagine glycosylation is present at Asn228. Cys281 and Cys329 form a disulfide bridge. Active-site residues include His288 and Asn308.

It belongs to the peptidase C1 family.

The chain is Cysteine proteinase B (LMCPB) from Leishmania mexicana.